The chain runs to 552 residues: Non-structural protein NS1 (552 aa).

The protein belongs to the orbivirus non-structural protein NS1 family.

In Bluetongue virus 10 (isolate USA) (BTV 10), this protein is Non-structural protein NS1 (Segment-5).